We begin with the raw amino-acid sequence, 160 residues long: Putative pre-16S rRNA nuclease (160 aa).

The protein belongs to the YqgF nuclease family.

Its subcellular location is the cytoplasm. Its function is as follows. Could be a nuclease involved in processing of the 5'-end of pre-16S rRNA. The protein is Putative pre-16S rRNA nuclease of Gluconobacter oxydans (strain 621H) (Gluconobacter suboxydans).